We begin with the raw amino-acid sequence, 320 residues long: Serpentine receptor class gamma-17 (320 aa).

6 consecutive transmembrane segments (helical) span residues 25-45 (AIYF…ISLL), 80-100 (IFFG…STFF), 155-175 (FIML…QVIA), 192-212 (WASL…FTIV), 237-257 (FTSI…LTFA), and 268-288 (YILQ…IMFL).

The protein belongs to the nematode receptor-like protein srg family.

The protein resides in the membrane. This Caenorhabditis elegans protein is Serpentine receptor class gamma-17 (srg-17).